A 446-amino-acid chain; its full sequence is Maltoporin (446 aa).

The N-terminal stretch at 1-25 is a signal peptide; sequence MMITLRKLPLAVAVAAGVMSAQAMA.

It belongs to the porin LamB (TC 1.B.3) family. Homotrimer formed of three 18-stranded antiparallel beta-barrels, containing three independent channels.

The protein resides in the cell outer membrane. It catalyses the reaction beta-maltose(in) = beta-maltose(out). Functionally, involved in the transport of maltose and maltodextrins. The polypeptide is Maltoporin (Escherichia coli O157:H7 (strain EC4115 / EHEC)).